We begin with the raw amino-acid sequence, 419 residues long: G protein-activated inward rectifier potassium channel 4 (419 aa).

The Cytoplasmic portion of the chain corresponds to 1-86 (MAGDSRNAMN…LFTTLVDLKW (86 aa)). Ser-5 is subject to Phosphoserine. The helical transmembrane segment at 87–111 (RFNLLVFTMVYTITWLFFGFIWWLI) threads the bilayer. Residues 112 to 135 (AYVRGDLDHVGDQEWIPCVENLSG) are Extracellular-facing. Positions 136–147 (FVSAFLFSIETE) form an intramembrane region, helical; Pore-forming. Positions 148–154 (TTIGYGF) form an intramembrane region, pore-forming. The short motif at 149–154 (TIGYGF) is the Selectivity filter element. At 155 to 163 (RVITEKCPE) the chain is on the extracellular side. The chain crosses the membrane as a helical span at residues 164–185 (GIILLLVQAILGSIVNAFMVGC). The Cytoplasmic portion of the chain corresponds to 186–419 (MFVKISQPKK…SVSQATRGSM (234 aa)). The tract at residues 388–419 (GCAEAGNEAEAEKDEEGEPNGLSVSQATRGSM) is disordered. Acidic residues predominate over residues 394 to 405 (NEAEAEKDEEGE). Residues 409 to 419 (LSVSQATRGSM) are compositionally biased toward polar residues.

It belongs to the inward rectifier-type potassium channel (TC 1.A.2.1) family. KCNJ5 subfamily. As to quaternary structure, associates with KCNJ3/GIRK1 to form a G-protein-activated heteromultimer pore-forming unit. Associates with KCNJ6/GRIK2 to form a G-protein-activated heteromultimer pore-forming unit. As to expression, expressed in the heart.

The protein localises to the membrane. The enzyme catalyses K(+)(in) = K(+)(out). Its activity is regulated as follows. Heteromultimer composed of KCNJ3/GIRK1 and KCNJ5/GIRK4 is activated by phosphatidylinositol 4,5 biphosphate (PtdIns(4,5)P2). Its function is as follows. Inward rectifier potassium channels are characterized by a greater tendency to allow potassium to flow into the cell rather than out of it. Their voltage dependence is regulated by the concentration of extracellular potassium; as external potassium is raised, the voltage range of the channel opening shifts to more positive voltages. The inward rectification is mainly due to the blockage of outward current by internal magnesium. Can be blocked by external barium. This potassium channel is controlled by G proteins. Forms a functional channel in association with KCNJ3/GIRK1. This is G protein-activated inward rectifier potassium channel 4 (Kcnj5) from Mus musculus (Mouse).